The sequence spans 340 residues: MGRDEEAAAQAEAWNHGFGFIKTSVIKTAIELEIPDILHNQGGPLSLSALSSAVGVPPDRLHRIMRFLAHHGVSKKTASPPGESDYYYAETAVSRSLTKDNLGPFVLLQGAQRGPSACITAQGLKSRERPGVEELGSDPLYEDPIFTEKVFRDAMTCHARVTTSAVIENYGEGFRGVGSLVDVGGSYGMTLGMLVEAFPWIRGICYDLPPVVAKAKPLHGVEFVAGSMFESVPKADVIMLMFVLHNWSDNECIDILKRCKEAIPAETGRLMIIDAIIDEDGEGDEFAGARLGLDVTMMAVTYEGKERTHREWAYILTEAGFRKYVVNNIKALESLIEAYP.

An S-adenosyl-L-methionine-binding site is contributed by Asp-207. His-245 acts as the Proton acceptor in catalysis.

This sequence belongs to the class I-like SAM-binding methyltransferase superfamily. Cation-independent O-methyltransferase family. Homodimer. As to expression, expressed in leaves.

It catalyses the reaction (2S)-naringenin + S-adenosyl-L-methionine = (2S)-sakuranetin + S-adenosyl-L-homocysteine + H(+). The enzyme catalyses scutellarein + S-adenosyl-L-methionine = scutellarein 7-methyl ether + S-adenosyl-L-homocysteine. It carries out the reaction apigenin + S-adenosyl-L-methionine = genkwanin + S-adenosyl-L-homocysteine + H(+). The catalysed reaction is luteolin + S-adenosyl-L-methionine = luteolin 7-methyl ether + S-adenosyl-L-homocysteine + H(+). It catalyses the reaction chrysoeriol + S-adenosyl-L-methionine = velutin + S-adenosyl-L-homocysteine. The enzyme catalyses diosmetin + S-adenosyl-L-methionine = luteolin 4',7-dimethyl ether + S-adenosyl-L-homocysteine. It carries out the reaction acacetin + S-adenosyl-L-methionine = apigenin 4',7-dimethyl ether + S-adenosyl-L-homocysteine. The catalysed reaction is scutellarein 4'-methyl ether + S-adenosyl-L-methionine = ladanein + S-adenosyl-L-homocysteine. It participates in flavonoid metabolism. Its function is as follows. Flavonoid 7-O-methyltransferase involved in the biosynthesis of polymethoxylated flavonoids natural products such as nevadensin and salvigenin, aroma compounds which contribute to the flavor of sweet basil, and exhibit pharmacological activities such as anti-allergic, anti-oxidant, antibacterial, anti-proliferative, and anti-inflammatory effects. Catalyzes S-adenosylmethionine-dependent regioselective 7-O-methylation of flavonoids; active on various hydroxylated flavonoid substrates, including apigenin (API) and luteolin (LUT), and, with a lower efficiency, scutellarein (SCU), naringenin (NAR), chrysoeriol (CHRYS), diosmetin (DIOS), acacetin (ACA) and scutellarein-7-methyl ether (SCU7Me). The polypeptide is Flavonoid 7-O-methyltransferase 1 (Ocimum basilicum (Sweet basil)).